Consider the following 299-residue polypeptide: Pyridoxal kinase PdxY (299 aa).

Ser-18 lines the substrate pocket. ATP-binding residues include Asp-120 and Glu-157. Asp-235 serves as a coordination point for substrate.

It belongs to the pyridoxine kinase family. PdxY subfamily. In terms of assembly, homodimer. Mg(2+) serves as cofactor.

The enzyme catalyses pyridoxal + ATP = pyridoxal 5'-phosphate + ADP + H(+). It functions in the pathway cofactor metabolism; pyridoxal 5'-phosphate salvage; pyridoxal 5'-phosphate from pyridoxal: step 1/1. Functionally, pyridoxal kinase involved in the salvage pathway of pyridoxal 5'-phosphate (PLP). Catalyzes the phosphorylation of pyridoxal to PLP. This chain is Pyridoxal kinase PdxY, found in Deinococcus geothermalis (strain DSM 11300 / CIP 105573 / AG-3a).